The sequence spans 182 residues: Protein GrpE (182 aa).

This sequence belongs to the GrpE family. As to quaternary structure, homodimer.

The protein resides in the cytoplasm. Its function is as follows. Participates actively in the response to hyperosmotic and heat shock by preventing the aggregation of stress-denatured proteins, in association with DnaK and GrpE. It is the nucleotide exchange factor for DnaK and may function as a thermosensor. Unfolded proteins bind initially to DnaJ; upon interaction with the DnaJ-bound protein, DnaK hydrolyzes its bound ATP, resulting in the formation of a stable complex. GrpE releases ADP from DnaK; ATP binding to DnaK triggers the release of the substrate protein, thus completing the reaction cycle. Several rounds of ATP-dependent interactions between DnaJ, DnaK and GrpE are required for fully efficient folding. This chain is Protein GrpE, found in Aquifex aeolicus (strain VF5).